The following is a 407-amino-acid chain: NADH-quinone oxidoreductase subunit D (407 aa).

This sequence belongs to the complex I 49 kDa subunit family. As to quaternary structure, NDH-1 is composed of 14 different subunits. Subunits NuoB, C, D, E, F, and G constitute the peripheral sector of the complex.

It is found in the cell inner membrane. The catalysed reaction is a quinone + NADH + 5 H(+)(in) = a quinol + NAD(+) + 4 H(+)(out). NDH-1 shuttles electrons from NADH, via FMN and iron-sulfur (Fe-S) centers, to quinones in the respiratory chain. The immediate electron acceptor for the enzyme in this species is believed to be ubiquinone. Couples the redox reaction to proton translocation (for every two electrons transferred, four hydrogen ions are translocated across the cytoplasmic membrane), and thus conserves the redox energy in a proton gradient. The polypeptide is NADH-quinone oxidoreductase subunit D (Roseobacter denitrificans (strain ATCC 33942 / OCh 114) (Erythrobacter sp. (strain OCh 114))).